The following is a 283-amino-acid chain: Ubiquinone biosynthesis protein COQ4, mitochondrial (283 aa).

The transit peptide at 1 to 25 (MAIAKSVRARAVGLRSLRVLCAQRS) directs the protein to the mitochondrion. Zn(2+)-binding residues include His-166, Asp-167, His-170, and Glu-182.

The protein belongs to the COQ4 family. Component of a multi-subunit COQ enzyme complex, composed of at least COQ3, COQ4, COQ5, COQ6, COQ7 and COQ9. The cofactor is Zn(2+).

Its subcellular location is the mitochondrion inner membrane. The enzyme catalyses a 4-hydroxy-3-methoxy-5-(all-trans-polyprenyl)benzoate + H(+) = a 2-methoxy-6-(all-trans-polyprenyl)phenol + CO2. Its pathway is cofactor biosynthesis; ubiquinone biosynthesis. In terms of biological role, lyase that catalyzes the C1-decarboxylation of 4-hydroxy-3-methoxy-5-(all-trans-polyprenyl)benzoic acid into 2-methoxy-6-(all-trans-polyprenyl)phenol during ubiquinone biosynthesis. The protein is Ubiquinone biosynthesis protein COQ4, mitochondrial of Coccidioides immitis (strain RS) (Valley fever fungus).